A 185-amino-acid chain; its full sequence is Calcium-binding protein K-like (185 aa).

EF-hand domains are found at residues 60 to 95 and 96 to 131; these read WDEA…MTRA and PTTD…VVVC. Residues Asp73, Asp75, Asn77, Glu84, Asp109, Asp111, Ser113, Tyr115, and Glu120 each coordinate Ca(2+).

This sequence belongs to the recoverin family.

The chain is Calcium-binding protein K-like from Dictyostelium discoideum (Social amoeba).